A 263-amino-acid chain; its full sequence is Phosphonoacetaldehyde hydrolase (263 aa).

The Nucleophile role is filled by aspartate 10. Residues aspartate 10 and alanine 12 each contribute to the Mg(2+) site. Residue lysine 51 is the Schiff-base intermediate with substrate of the active site. Aspartate 184 is a binding site for Mg(2+).

This sequence belongs to the HAD-like hydrolase superfamily. PhnX family. Homodimer. The cofactor is Mg(2+).

It catalyses the reaction phosphonoacetaldehyde + H2O = acetaldehyde + phosphate + H(+). Functionally, involved in phosphonate degradation. The polypeptide is Phosphonoacetaldehyde hydrolase (Bacteroides fragilis (strain ATCC 25285 / DSM 2151 / CCUG 4856 / JCM 11019 / LMG 10263 / NCTC 9343 / Onslow / VPI 2553 / EN-2)).